A 585-amino-acid polypeptide reads, in one-letter code: tRNA-guanine(15) transglycosylase (585 aa).

The Nucleophile role is filled by aspartate 95. The substrate site is built by aspartate 130 and alanine 196. Residues cysteine 279, cysteine 281, and cysteine 284 each contribute to the Zn(2+) site. In terms of domain architecture, PUA spans 507 to 582; that stretch reads VMRVVVNKEA…RAVKTRRGVE (76 aa).

The protein belongs to the archaeosine tRNA-ribosyltransferase family. Zn(2+) is required as a cofactor.

The catalysed reaction is guanosine(15) in tRNA + 7-cyano-7-deazaguanine = 7-cyano-7-carbaguanosine(15) in tRNA + guanine. It functions in the pathway tRNA modification; archaeosine-tRNA biosynthesis. In terms of biological role, exchanges the guanine residue with 7-cyano-7-deazaguanine (preQ0) at position 15 in the dihydrouridine loop (D-loop) of archaeal tRNAs. This Pyrococcus furiosus (strain ATCC 43587 / DSM 3638 / JCM 8422 / Vc1) protein is tRNA-guanine(15) transglycosylase.